Reading from the N-terminus, the 309-residue chain is Homoserine kinase (309 aa).

ATP is bound at residue 91 to 101; that stretch reads PIGSGLGSSAC.

The protein belongs to the GHMP kinase family. Homoserine kinase subfamily.

The protein resides in the cytoplasm. The catalysed reaction is L-homoserine + ATP = O-phospho-L-homoserine + ADP + H(+). It participates in amino-acid biosynthesis; L-threonine biosynthesis; L-threonine from L-aspartate: step 4/5. Its function is as follows. Catalyzes the ATP-dependent phosphorylation of L-homoserine to L-homoserine phosphate. The sequence is that of Homoserine kinase (thrB) from Serratia marcescens.